The sequence spans 54 residues: Lectin alpha-1 chain (54 aa).

Belongs to the leguminous lectin family. Tetramer of two alpha and two beta chains.

This Lathyrus hirsutus (Rough pea) protein is Lectin alpha-1 chain.